We begin with the raw amino-acid sequence, 550 residues long: Hydroxylamine reductase (550 aa).

[2Fe-2S] cluster is bound by residues Cys3, Cys6, Cys18, and Cys25. Residues His249, Glu273, Cys317, Cys405, Cys433, Cys458, Glu492, and Lys494 each coordinate hybrid [4Fe-2O-2S] cluster. Cys405 is subject to Cysteine persulfide.

This sequence belongs to the HCP family. [2Fe-2S] cluster is required as a cofactor. Requires hybrid [4Fe-2O-2S] cluster as cofactor.

Its subcellular location is the cytoplasm. The catalysed reaction is A + NH4(+) + H2O = hydroxylamine + AH2 + H(+). Functionally, catalyzes the reduction of hydroxylamine to form NH(3) and H(2)O. This Salmonella typhimurium (strain LT2 / SGSC1412 / ATCC 700720) protein is Hydroxylamine reductase.